A 49-amino-acid chain; its full sequence is Glycolactin (49 aa).

Belongs to the pancreatic ribonuclease family. Post-translationally, glycosylated. Milk.

The protein localises to the secreted. Functionally, manifests poly C-specific RNase activity toward yeast tRNA, elicits a dose-dependent inhibition of cell-free translation, inhibits formation of superoxide ions in vitro and inhibits the hemagglutinating activities of soybean lectin and Ricinus communis agglutinin 120. Inhibits HIV-1 reverse transcriptase. This Bos taurus (Bovine) protein is Glycolactin.